The sequence spans 339 residues: DNA-directed RNA polymerase subunit alpha (339 aa).

Residues 1–235 (MTIQKNWQEL…DQLNVFVNFE (235 aa)) form an alpha N-terminal domain (alpha-NTD) region. The alpha C-terminal domain (alpha-CTD) stretch occupies residues 251 to 339 (FNPAFLKKVD…ELAKRFEDHY (89 aa)).

Belongs to the RNA polymerase alpha chain family. Homodimer. The RNAP catalytic core consists of 2 alpha, 1 beta, 1 beta' and 1 omega subunit. When a sigma factor is associated with the core the holoenzyme is formed, which can initiate transcription.

The enzyme catalyses RNA(n) + a ribonucleoside 5'-triphosphate = RNA(n+1) + diphosphate. Functionally, DNA-dependent RNA polymerase catalyzes the transcription of DNA into RNA using the four ribonucleoside triphosphates as substrates. This Rhodopseudomonas palustris (strain ATCC BAA-98 / CGA009) protein is DNA-directed RNA polymerase subunit alpha.